Consider the following 129-residue polypeptide: Protein BEX2 (129 aa).

Positions 1-38 are disordered; sequence MESKVEQGVKNLNMENDHQEKEEKEEKPQDANKREPVV. Residues 15–36 are compositionally biased toward basic and acidic residues; sequence ENDHQEKEEKEEKPQDANKREP. R51 is subject to Omega-N-methylarginine. Residues 108 to 129 are disordered; the sequence is SLRAVSTDPPHHDHHDEFCLMP. The span at 116 to 129 shows a compositional bias: basic and acidic residues; sequence PPHHDHHDEFCLMP. A his cluster region spans residues 118-122; the sequence is HHDHH. Zn(2+) is bound at residue C126.

The protein belongs to the BEX family. As to quaternary structure, interacts with LMO2, possibly leading to regulate the transcriptional activity of a DNA-binding complex containing LMO2. Interacts with OMP.

It is found in the nucleus. Its subcellular location is the cytoplasm. Regulator of mitochondrial apoptosis and G1 cell cycle. Regulates the level of PP2A regulatory subunit B and PP2A phosphatase activity. In absence of reductive stress, acts as a pseudosubstrate for the CRL2(FEM1B) complex: associates with FEM1B via zinc, thereby preventing association between FEM1B and its substrates. The chain is Protein BEX2 (Bex2) from Rattus norvegicus (Rat).